Here is a 126-residue protein sequence, read N- to C-terminus: Small ribosomal subunit protein bS6 (126 aa).

It belongs to the bacterial ribosomal protein bS6 family.

Functionally, binds together with bS18 to 16S ribosomal RNA. The polypeptide is Small ribosomal subunit protein bS6 (Actinobacillus succinogenes (strain ATCC 55618 / DSM 22257 / CCUG 43843 / 130Z)).